We begin with the raw amino-acid sequence, 485 residues long: Glutamyl-tRNA(Gln) amidotransferase subunit A (485 aa).

Residues Lys-78 and Ser-153 each act as charge relay system in the active site. Ser-177 serves as the catalytic Acyl-ester intermediate.

It belongs to the amidase family. GatA subfamily. As to quaternary structure, heterotrimer of A, B and C subunits.

The enzyme catalyses L-glutamyl-tRNA(Gln) + L-glutamine + ATP + H2O = L-glutaminyl-tRNA(Gln) + L-glutamate + ADP + phosphate + H(+). Functionally, allows the formation of correctly charged Gln-tRNA(Gln) through the transamidation of misacylated Glu-tRNA(Gln) in organisms which lack glutaminyl-tRNA synthetase. The reaction takes place in the presence of glutamine and ATP through an activated gamma-phospho-Glu-tRNA(Gln). The chain is Glutamyl-tRNA(Gln) amidotransferase subunit A from Bacillus cereus (strain G9842).